The sequence spans 300 residues: Ribosomal protein L11 methyltransferase (300 aa).

Residues Thr152, Gly173, Asp195, and Asn234 each contribute to the S-adenosyl-L-methionine site.

Belongs to the methyltransferase superfamily. PrmA family.

The protein resides in the cytoplasm. The catalysed reaction is L-lysyl-[protein] + 3 S-adenosyl-L-methionine = N(6),N(6),N(6)-trimethyl-L-lysyl-[protein] + 3 S-adenosyl-L-homocysteine + 3 H(+). In terms of biological role, methylates ribosomal protein L11. This Burkholderia cenocepacia (strain ATCC BAA-245 / DSM 16553 / LMG 16656 / NCTC 13227 / J2315 / CF5610) (Burkholderia cepacia (strain J2315)) protein is Ribosomal protein L11 methyltransferase.